The sequence spans 184 residues: Ribosome-recycling factor (184 aa).

The protein belongs to the RRF family.

It localises to the cytoplasm. In terms of biological role, responsible for the release of ribosomes from messenger RNA at the termination of protein biosynthesis. May increase the efficiency of translation by recycling ribosomes from one round of translation to another. The protein is Ribosome-recycling factor of Clostridium botulinum (strain ATCC 19397 / Type A).